A 137-amino-acid chain; its full sequence is Ribosome-binding factor A (137 aa).

Belongs to the RbfA family. In terms of assembly, monomer. Binds 30S ribosomal subunits, but not 50S ribosomal subunits or 70S ribosomes.

Its subcellular location is the cytoplasm. Its function is as follows. One of several proteins that assist in the late maturation steps of the functional core of the 30S ribosomal subunit. Associates with free 30S ribosomal subunits (but not with 30S subunits that are part of 70S ribosomes or polysomes). Required for efficient processing of 16S rRNA. May interact with the 5'-terminal helix region of 16S rRNA. In Allorhizobium ampelinum (strain ATCC BAA-846 / DSM 112012 / S4) (Agrobacterium vitis (strain S4)), this protein is Ribosome-binding factor A.